Here is a 339-residue protein sequence, read N- to C-terminus: Alcohol dehydrogenase (339 aa).

Zn(2+) contacts are provided by Cys-38, His-61, Cys-92, Cys-95, Cys-98, Cys-106, and Cys-148. Residues 172-177 (GIGGLG), Asp-195, Lys-200, 260-262 (VGL), and Arg-331 each bind NAD(+).

It belongs to the zinc-containing alcohol dehydrogenase family. Requires Zn(2+) as cofactor.

The catalysed reaction is a primary alcohol + NAD(+) = an aldehyde + NADH + H(+). The enzyme catalyses a secondary alcohol + NAD(+) = a ketone + NADH + H(+). With respect to regulation, the rate-limiting step is NADH release. Catabolite repression. Functionally, active with primary alcohols, including methanol. The protein is Alcohol dehydrogenase (adh) of Geobacillus stearothermophilus (Bacillus stearothermophilus).